The primary structure comprises 21 residues: Bombinin-H1/H3 (21 aa).

A D-allo-isoleucine; in form H3 modification is found at isoleucine 2. Isoleucine 20 is subject to Isoleucine amide.

Belongs to the bombinin family. Expressed by the skin glands.

It localises to the secreted. Has antimicrobial and hemolytic activities. This Bombina variegata (Yellow-bellied toad) protein is Bombinin-H1/H3.